We begin with the raw amino-acid sequence, 347 residues long: Heat-inducible transcription repressor HrcA (347 aa).

The protein belongs to the HrcA family.

Its function is as follows. Negative regulator of class I heat shock genes (grpE-dnaK-dnaJ and groELS operons). Prevents heat-shock induction of these operons. This chain is Heat-inducible transcription repressor HrcA, found in Rhodococcus jostii (strain RHA1).